Here is a 289-residue protein sequence, read N- to C-terminus: MDRVLSLGKLPISFLKTLYLFSKSDIPAATLPSMAVALVLAAPCSFHLIIKGFLWNQLHLLTFQVKNQIDGIDEDSIAKPHRPLPSGRITPGQATLLYRVLFFLMWVAAVYTNTISCTLVYSIAIVVYNEGGLAAIPVVKNLIGAIGLGCYCWGTTIIFDGGKELHGLKAVAVLMIVGIFATTGHAQDFRDRTADATRGRKTIPLLLSQPVARWSLATITAAWTIGLIALWKPPAIVTLAYVAASLRCLDGFLSSYDEKDDYVSYCWYGFWLLGSNILPIFPRLRGELP.

A run of 6 helical transmembrane segments spans residues 35–55, 95–115, 142–162, 165–185, 222–242, and 262–282; these read AVAL…GFLW, TLLY…TNTI, LIGA…FDGG, LHGL…TTGH, AWTI…LAYV, and YVSY…PIFP.

This sequence belongs to the paxB family.

It localises to the membrane. It carries out the reaction (2E,6E)-farnesyl diphosphate = (+)-exo-beta-bergamotene + diphosphate. Its pathway is secondary metabolite biosynthesis; terpenoid biosynthesis. Beta-trans-bergamotene synthase; part of the gene cluster that mediates the biosynthesis of fumagillin, a meroterpenoid that has numerous biological activities including irreversible inhibition of human type 2 methionine aminopeptidase (METAP2). Within the pathway, the membrane-bound fumagillin beta-trans-bergamotene synthase af520 converts farnesyl pyrophosphate (FPP) to beta-trans-bergamotene. The pathway begins with the conversion of FPP to beta-trans-bergamotene by af520. The multifunctional cytochrome P450 monooxygenase af510 then converts beta-trans-bergamotene into 5-keto-demethoxyfumagillol via several oxydation steps. 5-keto-demethoxyfumagillol is then subjected to successive C-6 hydroxylation and O-methylation by the dioxygenase af480 and O-methyltransferase af390-400, respectively, to yield 5-keto-fumagillol, which is then stereoselectively reduced by the keto-reductase af490 to 5R-hydroxy-seco-sesquiterpene. The next step is the polyketide transferase af380-catalyzed transfer of a dodecapentaenoyl group synthesized by the polyketide synthase af370 onto 5R-hydroxy-seco-sesquiterpene which leads to the production of prefumagillin. Finally, oxidative cleavage by the monooxygenase af470 converts prefumagillin to fumagillin. This is Fumagillin beta-trans-bergamotene synthase af520 from Aspergillus fumigatus (strain ATCC MYA-4609 / CBS 101355 / FGSC A1100 / Af293) (Neosartorya fumigata).